The sequence spans 452 residues: Transcription factor ETV6 (452 aa).

Lys11 is subject to N6-acetyllysine; alternate. Lys11 participates in a covalent cross-link: Glycyl lysine isopeptide (Lys-Gly) (interchain with G-Cter in SUMO2); alternate. Thr18 bears the Phosphothreonine mark. Ser22 carries the post-translational modification Phosphoserine. In terms of domain architecture, PNT spans 40-124 (ALRMEEDSIR…ELLQHILKQR (85 aa)). The tract at residues 154–262 (EDNGVQRTSR…PRPSSPRQEG (109 aa)) is disordered. The segment covering 158-174 (VQRTSRPSAENVHQNPP) has biased composition (polar residues). Ser213, Ser238, and Ser257 each carry phosphoserine. Residue Lys288 forms a Glycyl lysine isopeptide (Lys-Gly) (interchain with G-Cter in SUMO2) linkage. Lys302 carries the post-translational modification N6-acetyllysine; alternate. A Glycyl lysine isopeptide (Lys-Gly) (interchain with G-Cter in SUMO2); alternate cross-link involves residue Lys302. Ser323 carries the post-translational modification Phosphoserine. Positions 339-420 (RLLWDYVYQL…PGQRLLFRFM (82 aa)) form a DNA-binding region, ETS. Residues Lys403 and Lys421 each participate in a glycyl lysine isopeptide (Lys-Gly) (interchain with G-Cter in SUMO2) cross-link.

The protein belongs to the ETS family. Can form homodimers or heterodimers with TEL2 or FLI1. Interacts with L3MBTL1 and HDAC9.

The protein localises to the nucleus. Functionally, transcriptional repressor; binds to the DNA sequence 5'-CCGGAAGT-3'. Plays a role in hematopoiesis and malignant transformation. The protein is Transcription factor ETV6 (ETV6) of Bos taurus (Bovine).